The primary structure comprises 136 residues: Large ribosomal subunit protein bL17 (136 aa).

This sequence belongs to the bacterial ribosomal protein bL17 family. Part of the 50S ribosomal subunit. Contacts protein L32.

The sequence is that of Large ribosomal subunit protein bL17 from Methylobacterium radiotolerans (strain ATCC 27329 / DSM 1819 / JCM 2831 / NBRC 15690 / NCIMB 10815 / 0-1).